We begin with the raw amino-acid sequence, 245 residues long: Enolase-phosphatase E1 (245 aa).

The Mg(2+) site is built by Asp-14 and Glu-16. Residues 141–142 (SS) and Lys-175 contribute to the substrate site. Asp-200 lines the Mg(2+) pocket.

This sequence belongs to the HAD-like hydrolase superfamily. MasA/MtnC family. As to quaternary structure, monomer. Mg(2+) serves as cofactor.

It localises to the cytoplasm. Its subcellular location is the nucleus. It carries out the reaction 5-methylsulfanyl-2,3-dioxopentyl phosphate + H2O = 1,2-dihydroxy-5-(methylsulfanyl)pent-1-en-3-one + phosphate. The protein operates within amino-acid biosynthesis; L-methionine biosynthesis via salvage pathway; L-methionine from S-methyl-5-thio-alpha-D-ribose 1-phosphate: step 3/6. It functions in the pathway amino-acid biosynthesis; L-methionine biosynthesis via salvage pathway; L-methionine from S-methyl-5-thio-alpha-D-ribose 1-phosphate: step 4/6. Its function is as follows. Bifunctional enzyme that catalyzes the enolization of 2,3-diketo-5-methylthiopentyl-1-phosphate (DK-MTP-1-P) into the intermediate 2-hydroxy-3-keto-5-methylthiopentenyl-1-phosphate (HK-MTPenyl-1-P), which is then dephosphorylated to form the acireductone 1,2-dihydroxy-3-keto-5-methylthiopentene (DHK-MTPene). This chain is Enolase-phosphatase E1, found in Drosophila grimshawi (Hawaiian fruit fly).